Consider the following 648-residue polypeptide: Actin-related protein 5 (648 aa).

The interval 34 to 59 is disordered; it reads LTKPRKDRKKEAAASEGSASQTTVEQ. 2 coiled-coil regions span residues 277–311 and 340–364; these read TAEQKQEKRRELAHRLLDIKKNREQEKLREDEQQL and TLEDLDSLIATINSRIKRAQERAQS. 2 disordered regions span residues 357 to 385 and 403 to 455; these read RAQERAQSGPRPSKQQERLNKMPKPPEGM and GRKQ…GMND. The segment covering 414-428 has biased composition (basic and acidic residues); it reads EQAKRHTHAAQERMR. A phosphoserine mark is found at S471 and S473.

The protein belongs to the actin family. ARP5 subfamily. As to quaternary structure, component of the chromatin remodeling Ino80 complex.

The protein resides in the nucleus. Functionally, proposed core component of the chromatin remodeling Ino80 complex which is involved in transcriptional regulation, DNA replication and probably DNA repair. The polypeptide is Actin-related protein 5 (Drosophila melanogaster (Fruit fly)).